A 1716-amino-acid chain; its full sequence is Histone-lysine N-methyltransferase SETD1A (1716 aa).

The interval L60–G89 is interaction with WDR82. In terms of domain architecture, RRM spans D84–K172. 7 disordered regions span residues P194–P367, T380–S499, F516–H670, A849–K869, K911–V1206, E1230–V1259, and G1275–P1297. Residues S222 to T231 show a composition bias toward low complexity. Polar residues predominate over residues C243 to G277. 2 stretches are compositionally biased toward low complexity: residues S278 to S295 and S315 to S357. The span at S430–P440 shows a compositional bias: pro residues. Residues G441–A461 are compositionally biased toward gly residues. Position 477 is a phosphoserine (S477). Residues S477–E487 are compositionally biased toward low complexity. The segment covering T488–S499 has biased composition (polar residues). S521 and S578 each carry phosphoserine. A compositionally biased stretch (polar residues) spans A581–S591. Composition is skewed to pro residues over residues S606 to Y631 and G638 to H670. Over residues Q859 to K869 the composition is skewed to basic and acidic residues. S930 is subject to Phosphoserine. Acidic residues-rich tracts occupy residues K991–V1009 and A1018–D1027. Positions S1028–S1071 are enriched in low complexity. S1110 carries the phosphoserine modification. Residues E1130–A1150 are compositionally biased toward pro residues. Residues D1283–D1292 are compositionally biased toward acidic residues. The HCFC1-binding motif (HBM) motif lies at E1307–A1311. Disordered stretches follow at residues E1355–R1427 and T1480–Y1508. Residues E1369 to S1383 are compositionally biased toward acidic residues. The segment covering R1399–P1412 has biased composition (basic residues). Over residues P1413–F1424 the composition is skewed to pro residues. An interaction with CFP1 region spans residues F1424–L1459. The segment at L1459 to R1546 is interaction with ASH2L, RBBP5 and WDR5. Residues G1501–E1506 carry the WDR5 interaction motif (WIN) motif. A RxxxRR motif motif is present at residues R1546 to R1551. The region spanning K1577–K1694 is the SET domain. An S-adenosyl-L-methionine-binding site is contributed by Y1693. One can recognise a Post-SET domain in the interval N1700–N1716.

This sequence belongs to the class V-like SAM-binding methyltransferase superfamily. Component of the SET1A/COMPASS complex composed of the catalytic subunit SETD1A, WDR5, WDR82, RBBP5, ASH2L/ASH2, CXXC1/CFP1, HCFC1 and DPY30 homotrimer. Forms a core complex with the evolutionary conserved subcomplex WRAD composed of WDR5, RBBP5, ASH2L/ASH2 and DPY30 subunits; WRAD differentially stimulates the methyltransferase activity. Interacts with BOD1L1 (via COMPASS-Shg1 domain) at replication forks. Interacts with HCFC1. Interacts with ASH2/ASH2L. Interacts with CXXC1/CFP1. Interacts with RBBP5. Interacts (via N-terminal region) with WDR82; the interaction is direct. Interacts (via the RRM domain) with hyperphosphorylated C-terminal domain (CTD) of RNA polymerase II large subunit (POLR2A) only in the presence of WDR82. Binds specifically to CTD heptad repeats phosphorylated on 'Ser-5' of each heptad. Interacts with ZNF335. Interacts with SUPT6H. Interacts with NAP1L1. Interacts (via WIN motif) with WDR5.

It localises to the nucleus. Its subcellular location is the nucleus speckle. It is found in the chromosome. The protein localises to the cytoplasm. The enzyme catalyses L-lysyl(4)-[histone H3] + S-adenosyl-L-methionine = N(6)-methyl-L-lysyl(4)-[histone H3] + S-adenosyl-L-homocysteine + H(+). It catalyses the reaction N(6)-methyl-L-lysyl(4)-[histone H3] + S-adenosyl-L-methionine = N(6),N(6)-dimethyl-L-lysyl(4)-[histone H3] + S-adenosyl-L-homocysteine + H(+). It carries out the reaction N(6),N(6)-dimethyl-L-lysyl(4)-[histone H3] + S-adenosyl-L-methionine = N(6),N(6),N(6)-trimethyl-L-lysyl(4)-[histone H3] + S-adenosyl-L-homocysteine + H(+). In terms of biological role, histone methyltransferase that catalyzes methyl group transfer from S-adenosyl-L-methionine to the epsilon-amino group of 'Lys-4' of histone H3 (H3K4) via a non-processive mechanism. Part of chromatin remodeling machinery, forms H3K4me1, H3K4me2 and H3K4me3 methylation marks at active chromatin sites where transcription and DNA repair take place. Responsible for H3K4me3 enriched promoters and transcriptional programming of inner mass stem cells and neuron progenitors during embryogenesis. Required for H3K4me1 mark at stalled replication forks. Mediates FANCD2-dependent nucleosome remodeling and RAD51 nucleofilaments stabilization at reversed forks, protecting them from nucleolytic degradation. Does not methylate 'Lys-4' of histone H3 if the neighboring 'Lys-9' residue is already methylated. Has RNA binding activity towards transcripts involved in RNA processing and the DNA damage response. The polypeptide is Histone-lysine N-methyltransferase SETD1A (Setd1a) (Mus musculus (Mouse)).